The primary structure comprises 209 residues: Protein GrpE (209 aa).

This sequence belongs to the GrpE family. Homodimer.

The protein localises to the cytoplasm. Participates actively in the response to hyperosmotic and heat shock by preventing the aggregation of stress-denatured proteins, in association with DnaK and GrpE. It is the nucleotide exchange factor for DnaK and may function as a thermosensor. Unfolded proteins bind initially to DnaJ; upon interaction with the DnaJ-bound protein, DnaK hydrolyzes its bound ATP, resulting in the formation of a stable complex. GrpE releases ADP from DnaK; ATP binding to DnaK triggers the release of the substrate protein, thus completing the reaction cycle. Several rounds of ATP-dependent interactions between DnaJ, DnaK and GrpE are required for fully efficient folding. This Colwellia psychrerythraea (strain 34H / ATCC BAA-681) (Vibrio psychroerythus) protein is Protein GrpE.